A 180-amino-acid chain; its full sequence is Methionine-R-sulfoxide reductase B2, mitochondrial (180 aa).

A mitochondrion-targeting transit peptide spans 1-41 (MSRFLVRLSTVVSKGATGKSVLPQKRIFAGIRLISSSTGLQ). One can recognise a MsrB domain in the interval 49–178 (STDWQRKLSP…NSVALNFKPR (130 aa)). Zn(2+) is bound by residues C88, C91, C144, and C147. C167 serves as the catalytic Nucleophile.

Belongs to the MsrB Met sulfoxide reductase family. It depends on Zn(2+) as a cofactor.

The protein resides in the mitochondrion. The enzyme catalyses L-methionyl-[protein] + [thioredoxin]-disulfide + H2O = L-methionyl-(R)-S-oxide-[protein] + [thioredoxin]-dithiol. It carries out the reaction [thioredoxin]-disulfide + L-methionine + H2O = L-methionine (R)-S-oxide + [thioredoxin]-dithiol. Methionine-sulfoxide reductase that specifically reduces methionine (R)-sulfoxide back to methionine. While in many cases, methionine oxidation is the result of random oxidation following oxidative stress, methionine oxidation is also a post-translational modification that takes place on specific residue. Upon oxidative stress, may play a role in the preservation of mitochondrial integrity by decreasing the intracellular reactive oxygen species build-up through its scavenging role, hence contributing to cell survival and protein maintenance. This chain is Methionine-R-sulfoxide reductase B2, mitochondrial (msrb2), found in Danio rerio (Zebrafish).